The chain runs to 373 residues: Putative ribosome biogenesis protein C8F11.04 (373 aa).

The tract at residues 265-373 (RKVVTKETAS…VKAGKNKVKH (109 aa)) is disordered. Positions 292-320 (KVEVAKESKDSKQQNVSDKKQVTVKEVPK) are enriched in basic and acidic residues. The segment covering 347 to 359 (KVSQSSLKANGTT) has biased composition (polar residues). The span at 362–373 (KKVKAGKNKVKH) shows a compositional bias: basic residues.

The protein belongs to the universal ribosomal protein uL1 family. Highly divergent. Component of the 90S pre-ribosomes.

It localises to the nucleus. Its subcellular location is the nucleolus. Functionally, involved in rRNA-processing and ribosome biosynthesis. This chain is Putative ribosome biogenesis protein C8F11.04, found in Schizosaccharomyces pombe (strain 972 / ATCC 24843) (Fission yeast).